The sequence spans 462 residues: MSLSLWQQCLARLQDELPATEFSMWIRPLQAELSDNTLALYAPNRFVLDWVRDKYLNNINGLLNDFCGSEVPLLRFEVGSKPAVRAHSHPVTASVSAPVAPVTRSAPVRPSWDSSPAQPELSYRSNVNPKHTFDNFVEGKSNQLARAAARQVADNPGGAYNPLFLYGGTGLGKTHLLHAVGNGIMARKANAKVVYMHSERFVQDMVKALQNNAIEEFKRYYRSVDALLIDDIQFFANKERSQEEFFHTFNALLEGNQQIILTSDRYPKEINGVEDRLKSRFGWGLTVAIEPPELETRVAILMKKADENDIRLPGEVAFFIAKRLRSNVRELEGALNRVIANANFTGRAITIDFVREALRDLLALQEKLVTIDNIQKTVAEYYKIKVADLLSKRRSRSVARPRQMAMALAKELTNHSLPEIGDAFGGRDHTTVLHACRKIEQLREESHDIKEDFSNLIRTLSS.

The interval 1-83 (MSLSLWQQCL…LRFEVGSKPA (83 aa)) is domain I, interacts with DnaA modulators. The interval 83-125 (AVRAHSHPVTASVSAPVAPVTRSAPVRPSWDSSPAQPELSYRS) is domain II. Residues 105 to 127 (SAPVRPSWDSSPAQPELSYRSNV) are disordered. Polar residues predominate over residues 112 to 127 (WDSSPAQPELSYRSNV). The domain III, AAA+ region stretch occupies residues 126-342 (NVNPKHTFDN…GALNRVIANA (217 aa)). Residues Gly-170, Gly-172, Lys-173, and Thr-174 each contribute to the ATP site. Residues 343–462 (NFTGRAITID…FSNLIRTLSS (120 aa)) form a domain IV, binds dsDNA region.

Belongs to the DnaA family. As to quaternary structure, oligomerizes as a right-handed, spiral filament on DNA at oriC.

It is found in the cytoplasm. In terms of biological role, plays an essential role in the initiation and regulation of chromosomal replication. ATP-DnaA binds to the origin of replication (oriC) to initiate formation of the DNA replication initiation complex once per cell cycle. Binds the DnaA box (a 9 base pair repeat at the origin) and separates the double-stranded (ds)DNA. Forms a right-handed helical filament on oriC DNA; dsDNA binds to the exterior of the filament while single-stranded (ss)DNA is stabiized in the filament's interior. The ATP-DnaA-oriC complex binds and stabilizes one strand of the AT-rich DNA unwinding element (DUE), permitting loading of DNA polymerase. After initiation quickly degrades to an ADP-DnaA complex that is not apt for DNA replication. Binds acidic phospholipids. The sequence is that of Chromosomal replication initiator protein DnaA from Yersinia enterocolitica serotype O:8 / biotype 1B (strain NCTC 13174 / 8081).